Here is an 828-residue protein sequence, read N- to C-terminus: Periplasmic nitrate reductase (828 aa).

Residues 1–31 constitute a signal peptide (tat-type signal); sequence MKLSRRSFMKANAVAAAAAAAGLSVPGVARA. Residues 39-95 form the 4Fe-4S Mo/W bis-MGD-type domain; that stretch reads IKWDKAPCRFCGTGCGVLVGTQQGRVVACQGDPDAPVNRGLNCIKGYFLPKIMYGKD. The [4Fe-4S] cluster site is built by cysteine 46, cysteine 49, cysteine 53, and cysteine 81. Residues lysine 83, glutamine 150, asparagine 175, cysteine 179, 212 to 219, 243 to 247, 262 to 264, methionine 372, glutamine 376, asparagine 482, 508 to 509, lysine 531, aspartate 558, and 718 to 727 each bind Mo-bis(molybdopterin guanine dinucleotide); these read WGANMAEM, STYQH, QSD, SD, and TGRVLEHWHT. Phenylalanine 794 contributes to the substrate binding site. Positions 802 and 819 each coordinate Mo-bis(molybdopterin guanine dinucleotide).

Belongs to the prokaryotic molybdopterin-containing oxidoreductase family. NasA/NapA/NarB subfamily. As to quaternary structure, component of the periplasmic nitrate reductase NapAB complex composed of NapA and NapB. [4Fe-4S] cluster is required as a cofactor. Mo-bis(molybdopterin guanine dinucleotide) serves as cofactor. In terms of processing, predicted to be exported by the Tat system. The position of the signal peptide cleavage has not been experimentally proven.

Its subcellular location is the periplasm. The enzyme catalyses 2 Fe(II)-[cytochrome] + nitrate + 2 H(+) = 2 Fe(III)-[cytochrome] + nitrite + H2O. Functionally, catalytic subunit of the periplasmic nitrate reductase complex NapAB. Receives electrons from NapB and catalyzes the reduction of nitrate to nitrite. In Shigella flexneri serotype 5b (strain 8401), this protein is Periplasmic nitrate reductase.